The following is a 113-amino-acid chain: MNTVRVTFLLVFVLAVSLGQADKDENRMEMQEKTEQGKSYLDFAENLLLQKLEELEAKLLEEDSEESRNSRQRRCIGEGVPCDENDPRCCSGLVCLKPTLHGIWYKSYYCYKK.

The first 21 residues, 1–21 (MNTVRVTFLLVFVLAVSLGQA), serve as a signal peptide directing secretion. Positions 22–74 (DKDENRMEMQEKTEQGKSYLDFAENLLLQKLEELEAKLLEEDSEESRNSRQRR) are excised as a propeptide. The interval 61–83 (EEDSEESRNSRQRRCIGEGVPCD) is disordered. Cystine bridges form between cysteine 75–cysteine 90, cysteine 82–cysteine 95, and cysteine 89–cysteine 110.

The protein belongs to the neurotoxin 14 (magi-1) family. 01 (HNTX-16) subfamily. In terms of tissue distribution, expressed by the venom gland.

The protein localises to the secreted. Its function is as follows. Probable ion channel inhibitor. This chain is U11-theraphotoxin-Hhn1a, found in Cyriopagopus hainanus (Chinese bird spider).